A 152-amino-acid polypeptide reads, in one-letter code: Superoxide dismutase [Cu-Zn] 1 (152 aa).

Residues His-45, His-47, and His-62 each coordinate Cu cation. A disulfide bond links Cys-56 and Cys-145. Residues His-62, His-70, His-79, and Asp-82 each coordinate Zn(2+). His-119 serves as a coordination point for Cu cation.

It belongs to the Cu-Zn superoxide dismutase family. Homodimer. Interacts with DJ1A and CCS. Cu cation is required as a cofactor. The cofactor is Zn(2+). As to expression, expressed in leaves (at protein level). The spatial localization is regulated by miR398-mediated silencing. Mostly present in flowers, old rosette leaves and inflorescence, and, to a lower extent, in cauline leaves, stems and roots.

It is found in the cytoplasm. Its subcellular location is the cytosol. The protein resides in the nucleus. It carries out the reaction 2 superoxide + 2 H(+) = H2O2 + O2. In terms of biological role, destroys radicals which are normally produced within the cells and which are toxic to biological systems. In Arabidopsis thaliana (Mouse-ear cress), this protein is Superoxide dismutase [Cu-Zn] 1 (CSD1).